The sequence spans 4690 residues: MDQVAVTRFPALHCFEGPKQRQSVGSNARHHTIRGNIDTQHQSQDETLRRFANFVSSLVGDDEISFDFIISPSNGGSDIAESGTAQAKKDPTQATSDYNGITLLRSTPFVESGHSEFGIIIRRQLRNNDSSLFTLEKSFVVTVDKSSYSVRICRDLVPRPFLQSISTSLCSYMGWTNPSQHSEEESNQELQLQTLNFQGQSVLNHPPLMTPPDFESQLCLPKRPQEYAKPLLHNAFLARVRENPGRIALDALSSTGRATYTYKNLDDLSSDLAEKILQIIGVDADHTDRNITVALSTSAELYIAWLGILKAGCVVCPVPTDCPSELLQHMTGLTSSKVVLGSAETLEYFDRIIGDSSIFTFINVETIARQNCEHLLQRPPPLVNTSENDVAYILFTSGSTGKPKGVQITHHAAVCSIAANIAASPHSFESGPSSIRWFQMAAPTFDLSVLEIFVTFSIGGTICACDRTMMLTDAESVITQLEATITMTTPTLASLLRPSRIPKLREVWVCGEMLKREASELFARDRDPSVADGDTNLLNAYGPTEATITCTVDARVSLKHRGSLIGPPLPTCSNIILDSSEPPKAVPLGFAGELAIGGPQLSIGYLKSPEKTAAAFVDVESYGKLYRTGDMARLIMGPDGTLQVEFLGRLSSDQIKILGRRVELGEIEAGLRNPLIAEVAAVALKPEVSGLPQVQLIAVVTCRTEKSDSDVLAACQERAENVLQPHMRPSIYYVMDKLPRLASEKTDRKTLAKYCLSPEKSGLRRLRNGDVDGHREAGSSSIPMLQSVIEAVSSVAIVGSDKITSATTLLSLGIDSLRSVRLLQNFREIGIEGLQVTDILTCHNLGDLDTKAQQALNRSTPSLAKARNLQTLLIDFENRHKKQCLSALGFNEDNIVSFLPVTTSQAVALASFLLTADANGFQAAPGGKAFIQHTVYTVKPELNSQRIVESWTRVLSRYDIMRSVFVEVNDDLTPFAQCILSPDHEAAQIKPHFYSAKSDNECKDVIQAAQKAAEEKISLYEPPRRLSVVQSPTQTIIVFSQLHSVFDGGSETLLLEDIEREYFGQPSIERTGVLTAVERHFSENRAEAAQFWQAYMDGFLSPSFPCLRSTVPGPDENVCGGYSFMSDLSLESLTRQAAALQCSPLSILQAAWAQILFTYTGERDVAFGNTMSDRFTTELANCSAPVLTIQSTRVNLNEENDKRNIDILLERTAQNTAALSYLHTPITGARYDTTIALQMYLNSGKGEALYERVCHPGMHNDLAVMIEVYPDRSGLLEFRLTYQTALLDDDAAYTMLANLARVTNHIMSYPNAKYMDPSVWTSLQGPGQLEQINGYHHLGQQLLHECVAEFAQKSPNAIALAFYDDLSVDHPKVQLTYADLEVKATRVAGFLMSQLPAKEGSKHVVPIFMEKCPELYITLLGILKAGAAWCPVDPSYPPARQIFLIEKTTAGICFTSKSTTSQLSSILPASFKSISVSDLLEGGSCSTSRTLKASESARLDNLSIQRSDIAYVIFTSGTTGTPKGVPISHESASLSIDSYIQRVNVDLDLRGCEVRFLQFANYTFDAFVCDVFTAWRLGGTLVSATRDILLGSFIALANKVGATHTSMTPTFASTLQPQDFETLRVATMGGEVLPQILADKWKSRMSLCNVYGPAETAINTTINRLSAASRSGNIGTALPAVNAYVMASGYPVMKHMLGELVISGPQLSPGYWDNVHSSNNRFRWNSTLQCRVYHTGDYVRQLADGSFDFVGRKDDLVKIRGMRVELTEISTVCSAGHESVVHSEVLLAKLPGSTQSSLICFVDCGLQKSSDVDNFCILKNEEAQLVAQAVKRHATAELPRHMVPDVFMPLNCLPRNQSSKVNRKRLLEVVGREWSMQPMSPVADEQVDPAWCIKHRPLLEKIQGVIKIMPTTLSRSTTLSELGVDSIGAIRLSSRLKNDGHDISAIQVLDSVTIEDLINHLSVKRQGTSNWKTLLSRYLDHWKPLVSRHLARDPAHFSLVPTTVFQDGMLVETLRDPMLYWASYSWRLPSTVDIARVRQAWQHVSKNHDILKVSFVPTAYFEQEETQSSGPSSMFIQLIDYNASMDWQEIVSDSGDWQQSIHALCANLQRTQHENNFSSPPWRVTILAQQDQRIMNLTIHHSLCDGEMLRSLMHDVAWAYSTAELPVKRCQVQEAVSRLAVRYSEPEGHKFWGDMLSPLVSQTSLGDATSNSPKAVVRKIRHRTTELQATRSTSKLTGLARRLGASSLSPLFRVTFGIMLTEYYEQQSVLFGEVRSERLLESQLVGAMAPLSATYPVPFRSSGNLKDMVHSQQILVMDSIRYGPPQPSDVRKILKKSRDEALYSAVYVLRQRSEDDGGSLAPWEEFKDIFEIFVDHEFALNVLEGADDTVTISLSVDETLMSSSAQAIFLQQLDALLIAFDKSAPEISLSGLNAHFPLDLLSIASSKVSAQYTSTVPPSHYIETWAKTHPEWKAVEVATGFLGSQEIVTEDWTYKKLNETANQVANLIIYASLHGRAIAVSLDRSLIAFAIIVGIMKSGNTYVPIEAGLPNDRKSFLLRDSRAAMAFVCDNKLDGVELPPETKVLDTKNKSFIENLSTQDTSDILNNYPENLDAYLLYTSGSTGAPKGVRVSRHNLSSFSDAWGKLIGNVAPKSLELGGVGKFLCLASRAFDVHIGEMFLAWRFGLCAVTGERLSMLDDLPRTFRELGVTHAGIVPSLLDQTGLVPEDAPHLVYLGVGGEKMTPRTQQIWSSSDRVALVNVYGPTEVTIGCSAGRILPDSDTRCIGHPLGDSVAHVLAPGSNEHVKKGMAGELVIEGSLVANGYLNRPDAKGFCDINGRKMYRTGDIVRMDADSSILFLGRKDEQVKVRGQRLELGEVSEVIRSLSPTDIDVVTLLLNHPGTSKQFLVSFVASSGAAVRGELRWINENYKEINNSLRQACEQTLPAYMVPDFIIPISFIPLRDTSAKTDAKALEHMFHTLSLGELFGESSSLVNKPTTAPSRDLTSIEKQILTVVKSVVGQDDKRDARPGSTLFQLGLDSIASVKLSFKLKKLGFSTTVARLLQNPTIEELGRMKNALKESHDAEPSNSESITTRFEELEKKTMNSLKDRETTHIESIRPCMPLQEVLVAHTMSHGSEADNAYVSHMIFELDPAVVVEHVKAAWAAVVKNTELLRTCFIDRENDIVQLVIKENHATPVWKHLSNGTNMLKEELLSCKKEIADDIVTNIDKSPPVRFTLASCDGADETNEMSLFMLSIHHALYDMVSIEMIFQDFEVAYTDSSLPRRPSTLPLLEHIAAQQQNESKAKSYWTTLFDGYDHGIEKISPRTAQTTARTLNASLTTLESLCSQTNMTLSALIQGVFAYVLARTLKRPDLIFGVVLSGRSIDVEGIDAMAAPCISTIPQRLNIGTDGETIAELITTVQDRLFKSMEYQYTSLRSLSRWLEISGPLFSSLFSFTKLSPPEDSGSSKSRILKPTEGEMFLDFELALECEADPGTDTVTLRTRSTMFDKMEELDALLEQMESLVTSFTRGENKAVDGDFGSMLHTRLLPPHGSLQEESDDWSVLEQQIRDVVVAFSGALPNEVKRTTPFIKYGIDSITTIRFSTLLRKNGFWVSGADVLRNPSVAKLATHIQTTSSFNGTAKDSDNEASEPAGIGNWSKALLAGAVSTKVLDDVVAVYPLTPLQAGMISATVMMDPTLYAHHHPFRLPQGTSIDQVRSAWSRLVAKHDILRTSFHEINQPRPQLVGAVHQESILNWHEVATEDVQVAIDDLIKRTQFPSVSSFETPPVKATVIRSPEDMLLVVSLHHATYDGTSIRFIFEDLWAILRGNRVPERNPFYETAMKIHNMSSGSVGFWADSLSGYGGAAAIAEAEDIQNKMTSKTMLLAQDTSALEQWCTEKGVTIQTICQLAVSKAVCAQTKSRDVVLGQVHAARLDINGADKVAGPMLNTVPLRLCIYDDSFTNHDYLRDLQAFQNKSLDHLHASLSDIQRLWRKENGRDGQLFEVLFIFRKGEDATEAPFWQPFEPEGSKESLPPSHYDLVIEVHQKSRGGLELEVHSRFADDTTSNLMSLLVESFESIRKHPDELAISSPGVLSKVPKPGLTRETGAVPTSPFDQSAIDQFLDPLRKVLSETTDTPVSSIDAQTSIFSIGVDSIVAIRVAGACRKAHIPLHTMEIMRNAKIGKLCEVAFAKSGQAAPNRSTTESNGVAPLLDQEVKKAAASKLGRAEAEIQEILPVLPGQEYHLACWLTSGKTLLEPVWVFKAENGLDAGRLRDTWISLVQKNDSLRTCFAQVKPTLAVQAILKPDCVDAAKSFTVQQVPENMTMEEYVKSEIHHLSLSPSSLYEPPVRIVLIQGGREGVSVLLRLHHALYDAWSMGILIDELSSLYCGTMQKPCPPLSVSHFAQFTQQKLRGKNEEQFWTETLGQCDPTILTPKADINTDSKSCNRAFVSFECVDVSMGALKSAARAFGITPQCLIQVAFGRMLSDVTESSSPVFGYYTAGRSADLEGIEALASPTLNMLPVAVPKDLVASQLAGTSLSILLQSFQDRTNSQSDYEQSRLRDVIKWAPNKGVSPLFNAHLNILWNDEILLKPQVSKDTLLRPWPLGVPSDYASPTPLSRGSSVDGLDTSFLPTNVLFADVGPSRETANLAIGIGCDPTLRDAQGLEEIARMFSGHLSRLVGSRDLV.

The adenylation 1 stretch occupies residues 238 to 656 (ARVRENPGRI…LGRLSSDQIK (419 aa)). Residues 779 to 856 (SSSIPMLQSV…DLDTKAQQAL (78 aa)) form the Carrier 1 domain. Ser816 is modified (O-(pantetheine 4'-phosphoryl)serine). Residues 924 to 1175 (APGGKAFIQH…AFGNTMSDRF (252 aa)) form a condensation 1 region. Residues 1349–1760 (EFAQKSPNAI…GRKDDLVKIR (412 aa)) form an adenylation 2 region. Residues 1889-1965 (PAWCIKHRPL…DLINHLSVKR (77 aa)) form the Carrier 2 domain. At Ser1926 the chain carries O-(pantetheine 4'-phosphoryl)serine. The tract at residues 2001–2285 (PTTVFQDGML…SERLLESQLV (285 aa)) is condensation 2. The interval 2464-2869 (TWAKTHPEWK…GRKDEQVKVR (406 aa)) is adenylation 3. The region spanning 3002–3079 (RDLTSIEKQI…ELGRMKNALK (78 aa)) is the Carrier 3 domain. The residue at position 3040 (Ser3040) is an O-(pantetheine 4'-phosphoryl)serine. Residues 3121-3530 (CMPLQEVLVA…QMESLVTSFT (410 aa)) form a condensation 3 region. The Carrier 4 domain occupies 3564–3637 (SVLEQQIRDV…KLATHIQTTS (74 aa)). Ser3598 carries the post-translational modification O-(pantetheine 4'-phosphoryl)serine. Residues 3679 to 4087 (VYPLTPLQAG…FESIRKHPDE (409 aa)) are condensation 4. One can recognise a Carrier 5 domain in the interval 4119–4195 (SAIDQFLDPL…KLCEVAFAKS (77 aa)). O-(pantetheine 4'-phosphoryl)serine is present on Ser4156. The interval 4262-4589 (WVFKAENGLD…FNAHLNILWN (328 aa)) is condensation 5.

Belongs to the NRP synthetase family.

It functions in the pathway siderophore biosynthesis. Nonribosomal peptide synthetase required for the biosynthetis of epichloenin A, an extracellular siderophore that plays a crucial role in endophyte-grass symbioses. SidN assembles epichloenin A by activating and incorporating three trans-anhydromevalonylhydroxyornithine (trans-AMHO), 1 glutamine and 4 glycine moieties. Trans-AMHO is produced from L-ornithine via 2 steps involving a L-ornithine N(5)-monooxygenase and an AHMO-N(5)-transacylase that have still to be identified. The third adenylation domain (A3) of sidN incorporates the hydroxamate groups of the siderophore which forms an octahedral iron complex. The other component amino acids are assembled by sidN adenylation domains A1 and A2. The chain is Nonribosomal peptide synthetase sidN from Epichloe festucae (strain Fl1).